We begin with the raw amino-acid sequence, 714 residues long: Polyribonucleotide nucleotidyltransferase (714 aa).

Mg(2+) is bound by residues Asp-487 and Asp-493. In terms of domain architecture, KH spans 554-613; it reads PRIEVLQIPTDKIRDVIGTGGKVIREIVEKTGAKINIEDDGTVKVASANGESIRAAIKWI. The 69-residue stretch at 623 to 691 folds into the S1 motif domain; that stretch reads GQIYDGTVVK…DRGKVRLSMK (69 aa).

This sequence belongs to the polyribonucleotide nucleotidyltransferase family. The cofactor is Mg(2+).

The protein localises to the cytoplasm. The enzyme catalyses RNA(n+1) + phosphate = RNA(n) + a ribonucleoside 5'-diphosphate. Involved in mRNA degradation. Catalyzes the phosphorolysis of single-stranded polyribonucleotides processively in the 3'- to 5'-direction. This Afipia carboxidovorans (strain ATCC 49405 / DSM 1227 / KCTC 32145 / OM5) (Oligotropha carboxidovorans) protein is Polyribonucleotide nucleotidyltransferase.